A 328-amino-acid chain; its full sequence is L-lactate dehydrogenase (328 aa).

NAD(+) contacts are provided by residues V18, E39, K46, Y71, and 85–86 (GA). Substrate-binding residues include Q88 and R94. Residues S107, 124–126 (AAN), and S149 contribute to the NAD(+) site. Substrate is bound at residue 126-129 (NPVD). 154-157 (DSAR) serves as a coordination point for substrate. The beta-D-fructose 1,6-bisphosphate site is built by R159 and H174. The active-site Proton acceptor is H181. Position 226 is a phosphotyrosine (Y226). T235 contacts substrate.

This sequence belongs to the LDH/MDH superfamily. LDH family. In terms of assembly, homotetramer.

The protein localises to the cytoplasm. The enzyme catalyses (S)-lactate + NAD(+) = pyruvate + NADH + H(+). It participates in fermentation; pyruvate fermentation to lactate; (S)-lactate from pyruvate: step 1/1. With respect to regulation, allosterically activated by fructose 1,6-bisphosphate (FBP). Its function is as follows. Catalyzes the conversion of lactate to pyruvate. This chain is L-lactate dehydrogenase, found in Streptococcus gordonii (strain Challis / ATCC 35105 / BCRC 15272 / CH1 / DL1 / V288).